The primary structure comprises 615 residues: DNA mismatch repair protein MutL (615 aa).

The interval 363-397 is disordered; the sequence is FAEPAVREPVAPRYTPAPASGSRPAAPWPNAQPGY. The segment covering 378–391 has biased composition (low complexity); it reads PAPASGSRPAAPWP.

It belongs to the DNA mismatch repair MutL/HexB family.

In terms of biological role, this protein is involved in the repair of mismatches in DNA. It is required for dam-dependent methyl-directed DNA mismatch repair. May act as a 'molecular matchmaker', a protein that promotes the formation of a stable complex between two or more DNA-binding proteins in an ATP-dependent manner without itself being part of a final effector complex. In Escherichia coli O157:H7 (strain EC4115 / EHEC), this protein is DNA mismatch repair protein MutL.